A 1055-amino-acid polypeptide reads, in one-letter code: Elongation factor 3 (1055 aa).

Val-45 is a binding site for ADP. 7 HEAT repeats span residues 45 to 86 (VEFF…NGAA), 96 to 133 (SAEN…SMNP), 135 to 172 (ASFV…SAPY), 175 to 213 (GEAM…LVEN), 217 to 255 (EKFV…APTI), 257 to 290 (LIAP…LVDS), and 295 to 337 (RPFL…VPVE). ABC transporter domains follow at residues 447–659 (CNIE…SYYQ) and 687–1004 (LKMR…KKAG). The ADP site is built by Asn-723, Glu-933, Asn-936, and His-962. Disordered regions lie at residues 987–1006 (HNWV…AGDD) and 1024–1055 (EKKL…DEEL). The segment covering 1033–1044 (RKAKKDRMARRK) has biased composition (basic residues).

This sequence belongs to the ABC transporter superfamily. ABCF family. EF3 subfamily. Associates with ribosomes.

The protein resides in the cytoplasm. Its subcellular location is the cytosol. It carries out the reaction ATP + H2O = ADP + phosphate + H(+). It functions in the pathway protein biosynthesis; polypeptide chain elongation. Functionally, ribosome-dependent ATPase that functions in cytoplasmic translation elongation. Required for the ATP-dependent release of deacylated tRNA from the ribosomal E-site during protein biosynthesis. Stimulates the eEF1A-dependent binding of aminoacyl-tRNA to the ribosomal A-site, which has reduced affinity for tRNA as long as the E-site is occupied. Assists translation termination by stimulating the release of nascent protein from the ribosome by release factors. Appears to target calcium-channel protein CCH1 to the plasma membrane. This Cryptococcus neoformans var. neoformans serotype D (strain JEC21 / ATCC MYA-565) (Filobasidiella neoformans) protein is Elongation factor 3.